Reading from the N-terminus, the 466-residue chain is IQ domain-containing protein C (466 aa).

Residues 6–35 (LVRKVSALQACVRGFLVRRQFQSLRAEYEA) enclose the IQ domain. 4 disordered regions span residues 105–157 (KSGE…PHSQ), 214–233 (EQAC…DQSY), 238–310 (TGEL…QTFG), and 394–466 (VLDL…EPPG). The span at 132-153 (PSQEKTRDTTRMENPEATDQRL) shows a compositional bias: basic and acidic residues. A compositionally biased stretch (polar residues) spans 282 to 293 (GPPSSIPSNSQA). Positions 297–306 (RLTKGPDDGR) are enriched in basic and acidic residues. A Phosphoserine modification is found at Ser438.

The polypeptide is IQ domain-containing protein C (IQCC) (Homo sapiens (Human)).